The primary structure comprises 363 residues: Probable endopolygalacturonase A (363 aa).

A signal peptide spans 1–20 (MQLLQSSVIAATVGAALVAA). A propeptide spanning residues 21-28 (APVELEAR) is cleaved from the precursor. A disulfide bridge connects residues cysteine 31 and cysteine 46. PbH1 repeat units lie at residues 158-187 (SDNLNITDVTIDNSAGTAEGHNTDAFDIGS), 188-209 (STYINIDGATVYNQDDCLAINS), 210-230 (GSHITFTNGYCDGGHGLSIGS), 239-260 (VEDVTISNSKVVNSQNGVRIKT), 268-290 (VSNVKFEDITLSGITKYGLVVEQ), and 302-347 (TNGI…SITG). Asparagine 162 is a glycosylation site (N-linked (GlcNAc...) asparagine). Aspartate 202 functions as the Proton donor in the catalytic mechanism. A disulfide bond links cysteine 204 and cysteine 220. Histidine 224 is an active-site residue. 2 disulfides stabilise this stretch: cysteine 330-cysteine 335 and cysteine 354-cysteine 363.

This sequence belongs to the glycosyl hydrolase 28 family.

It localises to the secreted. The catalysed reaction is (1,4-alpha-D-galacturonosyl)n+m + H2O = (1,4-alpha-D-galacturonosyl)n + (1,4-alpha-D-galacturonosyl)m.. Its function is as follows. Involved in maceration and soft-rotting of plant tissue. Hydrolyzes the 1,4-alpha glycosidic bonds of de-esterified pectate in the smooth region of the plant cell wall. In Aspergillus parasiticus, this protein is Probable endopolygalacturonase A (pgaA).